The chain runs to 359 residues: DNA integrity scanning protein DisA (359 aa).

The DAC domain occupies 7-145 (DDIFRATLAA…AGRRYVLDGA (139 aa)). ATP is bound by residues G74, L92, and 105–109 (TRHRT).

This sequence belongs to the DisA family. Homooctamer. It depends on Mg(2+) as a cofactor.

The catalysed reaction is 2 ATP = 3',3'-c-di-AMP + 2 diphosphate. Functionally, participates in a DNA-damage check-point that is active prior to asymmetric division when DNA is damaged. DisA forms globular foci that rapidly scan along the chromosomes during sporulation, searching for lesions. When a lesion is present, DisA pauses at the lesion site. This triggers a cellular response that culminates in a temporary block in sporulation initiation. Also has diadenylate cyclase activity, catalyzing the condensation of 2 ATP molecules into cyclic di-AMP (c-di-AMP). c-di-AMP acts as a signaling molecule that couples DNA integrity with progression of sporulation. The rise in c-di-AMP level generated by DisA while scanning the chromosome, operates as a positive signal that advances sporulation; upon encountering a lesion, the DisA focus arrests at the damaged site and halts c-di-AMP synthesis. This is DNA integrity scanning protein DisA from Parafrankia sp. (strain EAN1pec).